The chain runs to 328 residues: D-cysteine desulfhydrase (328 aa).

An N6-(pyridoxal phosphate)lysine modification is found at K51.

This sequence belongs to the ACC deaminase/D-cysteine desulfhydrase family. As to quaternary structure, homodimer. It depends on pyridoxal 5'-phosphate as a cofactor.

The enzyme catalyses D-cysteine + H2O = hydrogen sulfide + pyruvate + NH4(+) + H(+). Its function is as follows. Catalyzes the alpha,beta-elimination reaction of D-cysteine and of several D-cysteine derivatives. It could be a defense mechanism against D-cysteine. The sequence is that of D-cysteine desulfhydrase from Salmonella typhimurium (strain LT2 / SGSC1412 / ATCC 700720).